The sequence spans 309 residues: MTKKVGLLVMAYGTPYKDEDIERYYTDIRHGHKPSEEMIADLRGRYHAIGGLSPLAKITEAQAYGLEKALNDSQDEVEFKAYIGLKHIEPFIEDAVEAMHKDGIEEAISIVLAPHYSSFSVEAYNKRAKEAADKLGGPRINAINDWYKQPKFIQMWADRINETAKQIPADELLDTVLIVSAHSLPEKIKQHNDPYPNQLQETADFIFEKVVVPHYALGWQSEGKTGEPWLGPDVQDLTRELYGREKYKHFIYTPVGFVAEHLEVLYDNDYECKVVTDEVGAAYHRPPMPNSDPEFLEVLRTVVWEKYSN.

Fe-coproporphyrin III is bound by residues tyrosine 12, threonine 14, arginine 29, 45–46 (RY), serine 53, and tyrosine 124. Fe(2+)-binding residues include histidine 182 and glutamate 263.

This sequence belongs to the ferrochelatase family. Monomer.

It is found in the cytoplasm. It carries out the reaction Fe-coproporphyrin III + 2 H(+) = coproporphyrin III + Fe(2+). It participates in porphyrin-containing compound metabolism; protoheme biosynthesis. In terms of biological role, involved in coproporphyrin-dependent heme b biosynthesis. Catalyzes the insertion of ferrous iron into coproporphyrin III to form Fe-coproporphyrin III. This Listeria monocytogenes serovar 1/2a (strain ATCC BAA-679 / EGD-e) protein is Coproporphyrin III ferrochelatase.